The following is a 450-amino-acid chain: tRNA-2-methylthio-N(6)-dimethylallyladenosine synthase (450 aa).

In terms of domain architecture, MTTase N-terminal spans 14 to 132 (GEFFIETWGC…FPNYLNEVKK (119 aa)). The [4Fe-4S] cluster site is built by cysteine 23, cysteine 59, cysteine 93, cysteine 169, cysteine 173, and cysteine 176. The Radical SAM core domain occupies 155–385 (RKNSMKAFVT…VEVLNEISAK (231 aa)). Residues 388–450 (KAYEGKIEEV…NSFSLTGEEI (63 aa)) form the TRAM domain.

The protein belongs to the methylthiotransferase family. MiaB subfamily. Monomer. [4Fe-4S] cluster serves as cofactor.

Its subcellular location is the cytoplasm. It catalyses the reaction N(6)-dimethylallyladenosine(37) in tRNA + (sulfur carrier)-SH + AH2 + 2 S-adenosyl-L-methionine = 2-methylsulfanyl-N(6)-dimethylallyladenosine(37) in tRNA + (sulfur carrier)-H + 5'-deoxyadenosine + L-methionine + A + S-adenosyl-L-homocysteine + 2 H(+). Its function is as follows. Catalyzes the methylthiolation of N6-(dimethylallyl)adenosine (i(6)A), leading to the formation of 2-methylthio-N6-(dimethylallyl)adenosine (ms(2)i(6)A) at position 37 in tRNAs that read codons beginning with uridine. In Clostridium botulinum (strain ATCC 19397 / Type A), this protein is tRNA-2-methylthio-N(6)-dimethylallyladenosine synthase.